Reading from the N-terminus, the 930-residue chain is Protocadherin gamma-B6 (930 aa).

A signal peptide spans 1 to 30 (MGGSCAQRRRAGPRQVLFPLLLPFFYPTLC). 6 consecutive Cadherin domains span residues 31-133 (EPIR…APQF), 134-242 (DKKE…PPVF), 243-347 (SRDE…SPEI), 348-452 (IITS…APVF), 453-562 (DQTS…APRV), and 570-675 (DGSA…LPDL). The Extracellular portion of the chain corresponds to 31-691 (EPIRYSIPEE…SDPQAELQFY (661 aa)). Asn-304, Asn-419, and Asn-545 each carry an N-linked (GlcNAc...) asparagine glycan. The chain crosses the membrane as a helical span at residues 692–712 (LVVALALISVLFLLAVILAIA). Residues 713–930 (LRLRRSLSPT…KKKSGKKEKK (218 aa)) are Cytoplasmic-facing. 2 disordered regions span residues 791–839 (PHGG…WPNN) and 900–930 (ATLT…KEKK). The segment covering 800–839 (HPETLTSQAPPNTDWRFSQAQRPGTSGSQNGDDTGTWPNN) has biased composition (polar residues). The segment covering 920–930 (NKKKSGKKEKK) has biased composition (basic residues).

It is found in the cell membrane. Its function is as follows. Potential calcium-dependent cell-adhesion protein. May be involved in the establishment and maintenance of specific neuronal connections in the brain. The sequence is that of Protocadherin gamma-B6 (PCDHGB6) from Pan troglodytes (Chimpanzee).